Here is a 24-residue protein sequence, read N- to C-terminus: Xenoposin precursor fragment B2 (24 aa).

Expressed by the skin glands.

The protein localises to the secreted. In terms of biological role, has antimicrobial activity against Gram-negative bacterium E.coli ATCC 25922 (MIC=100 uM), Gram-positive bacterium S.auerus ATCC 25923 (MIC=25 uM). This is Xenoposin precursor fragment B2 from Xenopus borealis (Kenyan clawed frog).